Consider the following 524-residue polypeptide: MLKDIHQHRILILDFGSQYAQLIARRVREIGVYCELMPCDIDEETIRDFNPHGIILSGGPETVTLSHTLRAPAFIFEIGCPVLGICYGMQTMAYQLGGKVNRTAKAEFGHAQLRVLNPAFLFDGIEDQVSPQGEPLLDVWMSHGDIVSELPPGFEATACTDNSPLAAMADFKRRFFGLQFHPEVTHTPQGHRILAHFVIHICQCIPNWTTKHIIEDSIRDIQEKVGKEQVIVGLSGGVDSAVTATLVHKAIGDQLVCVLVDTGLLRLNEVDEVLNVFQKHLGAKVICVDAKDRFMKALKGISDPEEKRKIAGEQFIRVFEEQAKKLNVKWLGQGTIYPDVIESAKTKTGKGHIIKTHHNVGGLPLNMELKLIEPLRELFKDEVRKLGLELGLPADLIYRHPFPGPGLAIRILGEVNAEYINILKQADAIFIEELKKSDYYHQVSQAFAVFMPLKSVGVKGDARHYGYIIALRAVKTVDFMTAQWADLPHEFLSKVSHRIVNEIKEVSRVVYDMTNKPPATIEWE.

The Glutamine amidotransferase type-1 domain occupies 9–207 (RILILDFGSQ…VIHICQCIPN (199 aa)). Cysteine 86 acts as the Nucleophile in catalysis. Active-site residues include histidine 181 and glutamate 183. In terms of domain architecture, GMPS ATP-PPase spans 208 to 399 (WTTKHIIEDS…LGLPADLIYR (192 aa)). 235 to 241 (SGGVDSA) lines the ATP pocket.

As to quaternary structure, homodimer.

It carries out the reaction XMP + L-glutamine + ATP + H2O = GMP + L-glutamate + AMP + diphosphate + 2 H(+). The protein operates within purine metabolism; GMP biosynthesis; GMP from XMP (L-Gln route): step 1/1. In terms of biological role, catalyzes the synthesis of GMP from XMP. This Coxiella burnetii (strain CbuG_Q212) (Coxiella burnetii (strain Q212)) protein is GMP synthase [glutamine-hydrolyzing].